Consider the following 782-residue polypeptide: General transcription and DNA repair factor IIH helicase/translocase subunit XPB (782 aa).

A compositionally biased stretch (basic and acidic residues) spans 1-11; sequence MGKRDRADRDK. Disordered regions lie at residues 1 to 51 and 218 to 241; these read MGKR…ESGT and SAISKTAESSGGPSTSRVTDPQGK. The Nuclear localization signal motif lies at 6 to 18; it reads RADRDKKKSRKRH. Residues 21 to 30 are compositionally biased toward acidic residues; it reads DEEDDEEDAP. Over residues 218-236 the composition is skewed to polar residues; it reads SAISKTAESSGGPSTSRVT. The Helicase ATP-binding domain maps to 327–488; it reads MFGNGRARSG…DLNFLIGPKL (162 aa). An ATP-binding site is contributed by 340 to 347; sequence LPCGAGKS. The short motif at 441 to 444 is the DEVH box element; the sequence is DEVH. In terms of domain architecture, Helicase C-terminal spans 542–702; that stretch reads RACQFLIKFH…LAGMEEEDLA (161 aa). Residue Ser-686 is modified to Phosphoserine. Phosphoserine; by CK2 is present on Ser-751.

It belongs to the helicase family. RAD25/XPB subfamily. As to quaternary structure, component of the 7-subunit TFIIH core complex composed of XPB/ERCC3, XPD/ERCC2, GTF2H1, GTF2H2, GTF2H3, GTF2H4 and GTF2H5, which is active in NER. The core complex associates with the 3-subunit CDK-activating kinase (CAK) module composed of CCNH/cyclin H, CDK7 and MNAT1 to form the 10-subunit holoenzyme (holo-TFIIH) active in transcription. Interacts with PUF60. Interacts with ATF7IP. Interacts with KAT2A; leading to KAT2A recruitment to promoters and acetylation of histones. Part of TBP-based Pol II pre-initiation complex (PIC), in which Pol II core assembles with general transcription factors and other specific initiation factors including GTF2E1, GTF2E2, GTF2F1, GTF2F2, TCEA1, ERCC2, ERCC3, GTF2H2, GTF2H3, GTF2H4, GTF2H5, GTF2A1, GTF2A2, GTF2B and TBP; this large multi-subunit PIC complex mediates DNA unwinding and targets Pol II core to the transcription start site where the first phosphodiester bond forms. Post-translationally, phosphorylation on Ser-751 by CK2 controls the 5'-excision activity of ERCC1-XPF endonuclease; phosphorylated protein inhibits the excision activity and thus NER. Dephosphorylation reactivates the 5'-excision step. Phosphorylation has no effect on transcription or the 3'-5' helicase activity.

Its subcellular location is the nucleus. The catalysed reaction is Couples ATP hydrolysis with the unwinding of duplex DNA by translocating in the 3'-5' direction.. It catalyses the reaction ATP + H2O = ADP + phosphate + H(+). With respect to regulation, phosphorylation on Ser-751 by CK2 controls the 5'-excision activity of ERCC1-XPF endonuclease; phosphorylated protein inhibits the excision activity and thus NER. ATPase activity is stimulated by TFIIH subunit p52 (GTF2H4). DNA translocase activity by this subunit in TFIIH is stimulated by XPA, ERCC5/XPG and XFP plus ERCC1. In terms of biological role, ATP-dependent 3'-5' DNA helicase/translocase; binds dsDNA rather than ssDNA, unzipping it in a translocase rather than classical helicase activity. Component of the general transcription and DNA repair factor IIH (TFIIH) core complex. When complexed to CDK-activating kinase (CAK), involved in RNA transcription by RNA polymerase II. The ATPase activity of XPB/ERCC3, but not its helicase activity, is required for DNA opening; it may wrap around the damaged DNA wedging it open, causing localized melting and twisting that allows XPD/ERCC2 helicase to anchor. The ATP-dependent helicase activity of XPB/ERCC3 may be required for promoter escape. Also involved in transcription-coupled nucleotide excision repair (NER) of damaged DNA. In NER, TFIIH acts by opening DNA around the lesion to allow the excision of the damaged oligonucleotide and its replacement by a new DNA fragment. The structure of the TFIIH transcription complex differs from the NER-TFIIH complex; large movements by XPD/ERCC2 and XPB/ERCC3 are stabilized by XPA. The polypeptide is General transcription and DNA repair factor IIH helicase/translocase subunit XPB (ERCC3) (Pongo abelii (Sumatran orangutan)).